Consider the following 290-residue polypeptide: MITIKNITLNDPLIIASGIIPDVPNYVETICEKYKPSAITTKTVTLNPLEPHKPPTVIKLHDGIYMNAIGLGNPGAKAINEIGVLCPLIVSVGGSSINEIKEVVEVVQSKAKIIEINVSSPNRKGYGESLSKLIGDIIESVKSVTKLPVFVKLGPWDNVIELAGKALEKGADGLTLINTIKGLIIDVETFKPILYYGTGGVSGRCLYPIALRIIKDVYEEYGVDIIGVGGVYDWTDVIGMLAAGAKLVGLGTVLIEKGFSVIEEIRKGLQSYLLEKGLKFEDIIGISVRK.

FMN-binding positions include Ser17 and 42-43 (KT). Substrate-binding positions include Lys42, 67 to 71 (NAIGL), and Asn117. An FMN-binding site is contributed by Asn117. The Nucleophile role is filled by Ser120. Lys152 and Ile177 together coordinate FMN. 178-179 (NT) is a binding site for substrate. Residues Gly203, 229 to 230 (GG), and 251 to 252 (GT) each bind FMN.

Belongs to the dihydroorotate dehydrogenase family. Type 1 subfamily. As to quaternary structure, heterotetramer of 2 PyrK and 2 PyrD type B subunits. Requires FMN as cofactor.

The protein resides in the cytoplasm. The catalysed reaction is (S)-dihydroorotate + NAD(+) = orotate + NADH + H(+). It functions in the pathway pyrimidine metabolism; UMP biosynthesis via de novo pathway; orotate from (S)-dihydroorotate (NAD(+) route): step 1/1. Functionally, catalyzes the conversion of dihydroorotate to orotate with NAD(+) as electron acceptor. The chain is Dihydroorotate dehydrogenase B (NAD(+)), catalytic subunit (pyrD) from Saccharolobus solfataricus (strain ATCC 35092 / DSM 1617 / JCM 11322 / P2) (Sulfolobus solfataricus).